The primary structure comprises 448 residues: Tryptophan dimethylallyltransferase 1 (448 aa).

L-tryptophan-binding positions include 80 to 81 (IL) and Glu-89. Substrate contacts are provided by Arg-100, Lys-186, and Tyr-188. 2 residues coordinate L-tryptophan: Tyr-190 and Arg-251. The substrate site is built by Arg-264, Lys-266, Tyr-268, Gln-350, Tyr-352, Tyr-416, and Tyr-420.

The protein belongs to the tryptophan dimethylallyltransferase family. As to quaternary structure, homodimer.

The enzyme catalyses L-tryptophan + dimethylallyl diphosphate = 4-(3-methylbut-2-enyl)-L-tryptophan + diphosphate. The protein operates within alkaloid biosynthesis; ergot alkaloid biosynthesis. Functionally, catalyzes the first step of ergot alkaloid biosynthesis. Ergot alkaloids, which are produced by endophyte fungi, can enhance plant host fitness, but also cause livestock toxicosis to host plants. The polypeptide is Tryptophan dimethylallyltransferase 1 (dmaW1) (Epichloe coenophiala (Tall fescue endophyte fungus)).